An 847-amino-acid polypeptide reads, in one-letter code: Protein translocase subunit SecA (847 aa).

Residues glutamine 87, 105–109, and aspartate 495 each bind ATP; that span reads GEGKT. The interval 828 to 847 is disordered; that stretch reads SSNSPSDARNRPIEHDDNAV. A compositionally biased stretch (basic and acidic residues) spans 835-847; sequence ARNRPIEHDDNAV.

This sequence belongs to the SecA family. As to quaternary structure, monomer and homodimer. Part of the essential Sec protein translocation apparatus which comprises SecA, SecYEG and auxiliary proteins SecDF. Other proteins may also be involved.

Its subcellular location is the cell membrane. The protein localises to the cytoplasm. The catalysed reaction is ATP + H2O + cellular proteinSide 1 = ADP + phosphate + cellular proteinSide 2.. Functionally, part of the Sec protein translocase complex. Interacts with the SecYEG preprotein conducting channel. Has a central role in coupling the hydrolysis of ATP to the transfer of proteins into and across the cell membrane, serving as an ATP-driven molecular motor driving the stepwise translocation of polypeptide chains across the membrane. This chain is Protein translocase subunit SecA, found in Tropheryma whipplei (strain TW08/27) (Whipple's bacillus).